Consider the following 170-residue polypeptide: MKLMNVVKLMIRAIARAKKTDKPIVYIDMDNVLVDFQSGIDSLSIWEKNQYEGRYDECPGIFAHMKPMKGAIAAFEVLNKHFDCYILSTAPWDNPGSWQDKRLWVERYLGKGAYKRLILSHHKQLNFGHYLIDDRTKNGAGEFMGEHIHFGTDEFPDWFSVVTYLTSENK.

Residue Asp28 is the Nucleophile of the active site. The Mg(2+) site is built by Asp28, Asp30, and Asp134. The Proton donor role is filled by Asp30.

Belongs to the 5'(3')-deoxyribonucleotidase family. Mg(2+) is required as a cofactor.

Functionally, dephosphorylates the 5' and 2'(3')-phosphates of deoxyribonucleotides. The chain is Putative 5'(3')-deoxyribonucleotidase from Vibrio parahaemolyticus (KVP40).